Here is a 305-residue protein sequence, read N- to C-terminus: Imidazoleglycerol-phosphate dehydratase (305 aa).

It belongs to the imidazoleglycerol-phosphate dehydratase family.

Its subcellular location is the cytoplasm. It catalyses the reaction D-erythro-1-(imidazol-4-yl)glycerol 3-phosphate = 3-(imidazol-4-yl)-2-oxopropyl phosphate + H2O. It participates in amino-acid biosynthesis; L-histidine biosynthesis; L-histidine from 5-phospho-alpha-D-ribose 1-diphosphate: step 6/9. This chain is Imidazoleglycerol-phosphate dehydratase, found in Neisseria meningitidis serogroup C (strain 053442).